The following is a 1521-amino-acid chain: Suppressor of Ty 6 homolog (1521 aa).

The tract at residues 1-204 is disordered; it reads MDFIDNQAEE…EGAEDDARDV (204 aa). Basic residues predominate over residues 26-41; the sequence is KKMKMAKDKLKKKKKV. Positions 26-42 match the Nuclear localization signal motif; sequence KKMKMAKDKLKKKKKVV. Acidic residues-rich tracts occupy residues 45 to 56 and 67 to 76; these read SDEDEDDEDDEE and ADEDDEEEDA. Positions 77 to 89 are enriched in basic and acidic residues; the sequence is RSEKSDRSRRSEI. A compositionally biased stretch (acidic residues) spans 90–103; it reads NDELDDEDLDLIDE. Residues 127–149 are compositionally biased toward basic and acidic residues; that stretch reads PIRRSNQDDDDLQSERGSDDGDK. Over residues 167-177 the composition is skewed to acidic residues; the sequence is RSEDDFIEDDG. The S1 motif domain maps to 1182–1251; the sequence is LNAGRPGGCV…EKFSILLSCK (70 aa). The 90-residue stretch at 1299-1388 folds into the SH2 domain; sequence HPNFHNVSYE…IARFVLPMIQ (90 aa). Residues 1490 to 1521 form a disordered region; the sequence is GIRSSLSYRPTGRTGPPPSAPYQQPPQQQYYR. Residues 1504–1513 are compositionally biased toward pro residues; the sequence is GPPPSAPYQQ.

Belongs to the SPT6 family. In terms of assembly, interacts with glp-1 and lin-12.

The protein localises to the nucleus. In terms of biological role, histone H3-H4 chaperone that plays a role in maintenance of chromatin structure during RNA polymerase II transcription elongation. May be required for several aspects of morphogenesis of C.briggsae, including regulation of division in the germline and gut and specification of ventral-uterine precursor cell fate. The protein is Suppressor of Ty 6 homolog (emb-5) of Caenorhabditis briggsae.